Consider the following 327-residue polypeptide: ATP-dependent 6-phosphofructokinase (327 aa).

Gly-12 lines the ATP pocket. ADP is bound by residues 22–26 (RGVVR) and 55–60 (RYSVSD). Residues 73 to 74 (RF) and 103 to 106 (GDGS) each bind ATP. Residue Asp-104 participates in Mg(2+) binding. 127 to 129 (TID) serves as a coordination point for substrate. Asp-129 (proton acceptor) is an active-site residue. Residue Arg-156 participates in ADP binding. Substrate contacts are provided by residues Arg-164 and 171-173 (MGR). Residues 187–189 (GCE), Lys-213, and 215–217 (KKH) each bind ADP. Residues Glu-224, Arg-245, and 251–254 (HIQR) contribute to the substrate site.

The protein belongs to the phosphofructokinase type A (PFKA) family. ATP-dependent PFK group I subfamily. Prokaryotic clade 'B1' sub-subfamily. Homotetramer. Requires Mg(2+) as cofactor.

It localises to the cytoplasm. It catalyses the reaction beta-D-fructose 6-phosphate + ATP = beta-D-fructose 1,6-bisphosphate + ADP + H(+). Its pathway is carbohydrate degradation; glycolysis; D-glyceraldehyde 3-phosphate and glycerone phosphate from D-glucose: step 3/4. Allosterically activated by ADP and other diphosphonucleosides, and allosterically inhibited by phosphoenolpyruvate. Functionally, catalyzes the phosphorylation of D-fructose 6-phosphate to fructose 1,6-bisphosphate by ATP, the first committing step of glycolysis. The sequence is that of ATP-dependent 6-phosphofructokinase from Hamiltonella defensa subsp. Acyrthosiphon pisum (strain 5AT).